Reading from the N-terminus, the 213-residue chain is 3-demethoxyubiquinol 3-hydroxylase (213 aa).

Fe cation is bound by residues Glu62, Glu92, His95, Glu144, Glu176, and His179.

It belongs to the COQ7 family. Fe cation is required as a cofactor.

Its subcellular location is the cell membrane. The enzyme catalyses a 5-methoxy-2-methyl-3-(all-trans-polyprenyl)benzene-1,4-diol + AH2 + O2 = a 3-demethylubiquinol + A + H2O. Its pathway is cofactor biosynthesis; ubiquinone biosynthesis. Functionally, catalyzes the hydroxylation of 2-nonaprenyl-3-methyl-6-methoxy-1,4-benzoquinol during ubiquinone biosynthesis. The protein is 3-demethoxyubiquinol 3-hydroxylase of Legionella pneumophila (strain Paris).